We begin with the raw amino-acid sequence, 219 residues long: Poxin (219 aa).

Histidine 17 acts as the Proton donor in catalysis. The Shared with catalytic histidine of dimeric partner role is filled by tyrosine 138. Lysine 142 functions as the Proton acceptor; shared with catalytic histidine of dimeric partner in the catalytic mechanism.

It belongs to the poxin family. As to quaternary structure, homodimer.

It catalyses the reaction 2',3'-cGAMP + H2O = Gp(2'-5')Ap(3') + H(+). In terms of biological role, nuclease that is responsible for viral evasion of host cGAS-STING innate immunity. Cleaves 2',3'-cGAMP which is produced by host cGAS following recognition of cytosolic DNA and blocks the subsequent 2',3'-cGAMP-mediated activation of TMEM173/STING, which normally spreads to adjacent cells and activates the interferon and NF-kappa-B immune responses. In Homo sapiens (Human), this protein is Poxin (OPG188).